We begin with the raw amino-acid sequence, 381 residues long: Flagellar P-ring protein (381 aa).

Positions 1–33 are cleaved as a signal peptide; that stretch reads MQFFNTLHPTRPHWLLAALCLIASLLGAGTAQA.

This sequence belongs to the FlgI family. As to quaternary structure, the basal body constitutes a major portion of the flagellar organelle and consists of four rings (L,P,S, and M) mounted on a central rod.

It localises to the periplasm. Its subcellular location is the bacterial flagellum basal body. Functionally, assembles around the rod to form the L-ring and probably protects the motor/basal body from shearing forces during rotation. This chain is Flagellar P-ring protein, found in Albidiferax ferrireducens (strain ATCC BAA-621 / DSM 15236 / T118) (Rhodoferax ferrireducens).